The sequence spans 459 residues: tRNA modification GTPase MnmE (459 aa).

The (6S)-5-formyl-5,6,7,8-tetrahydrofolate site is built by Arg23, Glu88, and Arg127. A TrmE-type G domain is found at 223–381; sequence GLNTVIVGKP…FKEVIKELFF (159 aa). Residue Asn233 participates in K(+) binding. GTP-binding positions include 233–238, 252–258, and 277–280; these read NVGKSS, TDVPGTT, and DTAG. Residue Ser237 coordinates Mg(2+). Thr252, Val254, and Thr257 together coordinate K(+). Thr258 is a binding site for Mg(2+). Residue Lys459 coordinates (6S)-5-formyl-5,6,7,8-tetrahydrofolate.

The protein belongs to the TRAFAC class TrmE-Era-EngA-EngB-Septin-like GTPase superfamily. TrmE GTPase family. In terms of assembly, homodimer. Heterotetramer of two MnmE and two MnmG subunits. K(+) is required as a cofactor.

The protein resides in the cytoplasm. In terms of biological role, exhibits a very high intrinsic GTPase hydrolysis rate. Involved in the addition of a carboxymethylaminomethyl (cmnm) group at the wobble position (U34) of certain tRNAs, forming tRNA-cmnm(5)s(2)U34. The sequence is that of tRNA modification GTPase MnmE from Clostridium novyi (strain NT).